We begin with the raw amino-acid sequence, 507 residues long: Arabinose import ATP-binding protein AraG (507 aa).

ABC transporter domains are found at residues 14–249 (LRFN…MVGR) and 249–505 (RDIQ…LPRT). ATP is bound at residue 46–53 (GENGAGKS).

It belongs to the ABC transporter superfamily. Arabinose importer (TC 3.A.1.2.2) family. The complex is composed of two ATP-binding proteins (AraG), two transmembrane proteins (AraH) and a solute-binding protein (AraF).

It localises to the cell inner membrane. It carries out the reaction L-arabinose(out) + ATP + H2O = L-arabinose(in) + ADP + phosphate + H(+). Its function is as follows. Part of the ABC transporter complex AraFGH involved in arabinose import. Responsible for energy coupling to the transport system. This chain is Arabinose import ATP-binding protein AraG, found in Pseudomonas savastanoi pv. phaseolicola (strain 1448A / Race 6) (Pseudomonas syringae pv. phaseolicola (strain 1448A / Race 6)).